We begin with the raw amino-acid sequence, 363 residues long: Aminopyrrolnitrin oxygenase PrnD (363 aa).

The Rieske domain maps to 29–137; it reads WYVAMRSNEL…TAERYGYVWV (109 aa). [2Fe-2S] cluster is bound by residues C69, H71, C88, and H91.

Homodimer. It depends on [2Fe-2S] cluster as a cofactor. Requires Fe cation as cofactor. FMN serves as cofactor.

It carries out the reaction aminopyrrolnitrin + NADPH + 2 O2 + H(+) = pyrrolnitrin + NADP(+) + 2 H2O. Its pathway is antibiotic biosynthesis. In terms of biological role, involved in the biosynthesis of the antifungal antibiotic pyrrolnitrin (PRN). Catalyzes the oxidation of the amino group of aminopyrrolnitrin (APRN) to a nitro group to form PRN. It has high substrate specificity toward physiological substrate aminopyrrolnitrin, p-aminobenzylamine (pABA), p-aminobenzyl alcohol, and p-aminophenyl alanine. The sequence is that of Aminopyrrolnitrin oxygenase PrnD (prnD) from Pseudomonas fluorescens.